Here is an 82-residue protein sequence, read N- to C-terminus: Small ribosomal subunit protein bS16 (82 aa).

This sequence belongs to the bacterial ribosomal protein bS16 family.

The sequence is that of Small ribosomal subunit protein bS16 from Microcystis aeruginosa (strain NIES-843 / IAM M-2473).